The chain runs to 87 residues: uncharacterized protein (87 aa).

This sequence to A.fulgidus AF_1348 and AF_1363.

This is an uncharacterized protein from Archaeoglobus fulgidus (strain ATCC 49558 / DSM 4304 / JCM 9628 / NBRC 100126 / VC-16).